Reading from the N-terminus, the 80-residue chain is Exodeoxyribonuclease 7 small subunit (80 aa).

It belongs to the XseB family. In terms of assembly, heterooligomer composed of large and small subunits.

It localises to the cytoplasm. It catalyses the reaction Exonucleolytic cleavage in either 5'- to 3'- or 3'- to 5'-direction to yield nucleoside 5'-phosphates.. Bidirectionally degrades single-stranded DNA into large acid-insoluble oligonucleotides, which are then degraded further into small acid-soluble oligonucleotides. This is Exodeoxyribonuclease 7 small subunit from Pseudomonas fluorescens (strain SBW25).